A 298-amino-acid polypeptide reads, in one-letter code: Ribosomal RNA processing protein 36 homolog (298 aa).

Positions 1–131 are disordered; it reads MKPDIIKKRR…SDAPVEMTAM (131 aa). Over residues 14 to 56 the composition is skewed to acidic residues; the sequence is SDDEDEYNEEDEMYEDDNNNYEEDEDDDDDDDEDDEDDDENEE. 2 stretches are compositionally biased toward polar residues: residues 61–70 and 83–92; these read QQLSNVSFSS and LNLNTITKNL. Coiled coils occupy residues 88-112 and 196-228; these read ITKN…MNSK and RERD…KNKL. Over residues 98–111 the composition is skewed to basic and acidic residues; it reads FKKEEQQEKEEMNS. Positions 279–298 are disordered; that stretch reads ISSKEKTFLPQRRSFDQDEN.

This sequence belongs to the RRP36 family.

Its subcellular location is the nucleus. The protein resides in the nucleolus. Functionally, involved in the early processing steps of the pre-rRNA in the maturation pathway leading to the 18S rRNA. This is Ribosomal RNA processing protein 36 homolog from Dictyostelium discoideum (Social amoeba).